A 419-amino-acid polypeptide reads, in one-letter code: Mitochondrial chaperone BCS1 (419 aa).

Over 1–15 the chain is Mitochondrial intermembrane; sequence MPLSDFVLALKDNPY. A helical membrane pass occupies residues 16 to 32; the sequence is FGAGFGLVGVGTALALA. At 33–419 the chain is on the mitochondrial matrix side; that stretch reads RKGAQLGLVA…AIQNAESLRR (387 aa). Tyrosine 181 carries the post-translational modification Phosphotyrosine. 230 to 237 provides a ligand contact to ATP; that stretch reads GPPGCGKS.

This sequence belongs to the AAA ATPase family. BCS1 subfamily. Interacts with LETM1.

Its subcellular location is the mitochondrion inner membrane. The enzyme catalyses ATP + H2O = ADP + phosphate + H(+). Functionally, chaperone necessary for the incorporation of Rieske iron-sulfur protein UQCRFS1 into the mitochondrial respiratory chain complex III. Plays an important role in the maintenance of mitochondrial tubular networks, respiratory chain assembly and formation of the LETM1 complex. In Bos taurus (Bovine), this protein is Mitochondrial chaperone BCS1 (BCS1L).